The sequence spans 134 residues: Profilin-1 (134 aa).

It belongs to the profilin family. Occurs in many kinds of cells as a complex with monomeric actin in a 1:1 ratio.

The protein localises to the cytoplasm. It is found in the cytoskeleton. Its function is as follows. Binds to actin and affects the structure of the cytoskeleton. At high concentrations, profilin prevents the polymerization of actin, whereas it enhances it at low concentrations. By binding to PIP2, it inhibits the formation of IP3 and DG. The sequence is that of Profilin-1 (PRO1) from Nicotiana tabacum (Common tobacco).